The sequence spans 348 residues: Ethanol acetyltransferase 2 (348 aa).

Residues 1–19 constitute a mitochondrion transit peptide; it reads MIFNSLSIKRLSSTXTSLP. The 257-residue stretch at 49-305 folds into the AB hydrolase-1 domain; sequence IIFLHGIYGY…VMKERPQEYI (257 aa). Active-site charge relay system residues include serine 121, aspartate 145, and histidine 294.

This sequence belongs to the AB hydrolase superfamily.

Its subcellular location is the mitochondrion. It carries out the reaction ethanol + acetyl-CoA = ethyl acetate + CoA. The enzyme catalyses acetyl-CoA + H2O = acetate + CoA + H(+). The catalysed reaction is ethyl acetate + H2O = ethanol + acetate + H(+). Alcohol acetyltransferase that catalyzes the synthesis of ethyl acetate from ethanol and acetyl-CoA. Can also function as a thioesterase by hydrolyzing acetyl-CoA in the absence of ethanol, as well as esterase hydrolyzing ethyl acetate. This chain is Ethanol acetyltransferase 2 (EAT2), found in Hanseniaspora uvarum (Yeast).